The following is a 154-amino-acid chain: MATLPLPTQTSTISLPKPYLSNSFSFPLRNATLSTTTNRRNFLTTGRIIARAYKVVVEHDGKTTELEVEPDETILSKALDSGLDVPYDCNLGVCMTCPAKLVTGTVDQSGGMLSDDVVERGYTLLCASYPTSDCHIKMIPEEELLSLQLATAND.

A chloroplast-targeting transit peptide spans 1–56; the sequence is MATLPLPTQTSTISLPKPYLSNSFSFPLRNATLSTTTNRRNFLTTGRIIARAYKVV. Residues 57 to 142 enclose the 2Fe-2S ferredoxin-type domain; sequence VEHDGKTTEL…DCHIKMIPEE (86 aa). C89, C94, C97, and C126 together coordinate [2Fe-2S] cluster.

Belongs to the 2Fe2S plant-type ferredoxin family. [2Fe-2S] cluster is required as a cofactor.

It localises to the plastid. It is found in the chloroplast. Functionally, ferredoxins are iron-sulfur proteins that transfer electrons in a wide variety of metabolic reactions. Mediates alternative electron partitioning in conditions of acceptor limitation at photosystem I. Accepts electrons from photosystem I (PSI) and is capable of electron transfer with FNR, but cannot support photoreduction of NADP(+). In Arabidopsis thaliana (Mouse-ear cress), this protein is Ferredoxin C 1, chloroplastic.